Consider the following 150-residue polypeptide: Small ribosomal subunit protein uS13 (150 aa).

Belongs to the universal ribosomal protein uS13 family. As to quaternary structure, part of the 30S ribosomal subunit. Forms a loose heterodimer with protein S19. Forms two bridges to the 50S subunit in the 70S ribosome.

Located at the top of the head of the 30S subunit, it contacts several helices of the 16S rRNA. In the 70S ribosome it contacts the 23S rRNA (bridge B1a) and protein L5 of the 50S subunit (bridge B1b), connecting the 2 subunits; these bridges are implicated in subunit movement. The protein is Small ribosomal subunit protein uS13 of Methanocorpusculum labreanum (strain ATCC 43576 / DSM 4855 / Z).